A 156-amino-acid polypeptide reads, in one-letter code: ATP synthase subunit b 2 (156 aa).

Residues 6–26 (SMFGQAISFVIFVWLCMKYVW) traverse the membrane as a helical segment.

The protein belongs to the ATPase B chain family. F-type ATPases have 2 components, F(1) - the catalytic core - and F(0) - the membrane proton channel. F(1) has five subunits: alpha(3), beta(3), gamma(1), delta(1), epsilon(1). F(0) has three main subunits: a(1), b(2) and c(10-14). The alpha and beta chains form an alternating ring which encloses part of the gamma chain. F(1) is attached to F(0) by a central stalk formed by the gamma and epsilon chains, while a peripheral stalk is formed by the delta and b chains.

The protein resides in the cell inner membrane. Functionally, f(1)F(0) ATP synthase produces ATP from ADP in the presence of a proton or sodium gradient. F-type ATPases consist of two structural domains, F(1) containing the extramembraneous catalytic core and F(0) containing the membrane proton channel, linked together by a central stalk and a peripheral stalk. During catalysis, ATP synthesis in the catalytic domain of F(1) is coupled via a rotary mechanism of the central stalk subunits to proton translocation. Component of the F(0) channel, it forms part of the peripheral stalk, linking F(1) to F(0). This Vibrio campbellii (strain ATCC BAA-1116) protein is ATP synthase subunit b 2.